The chain runs to 185 residues: Large ribosomal subunit protein uL5 (185 aa).

This sequence belongs to the universal ribosomal protein uL5 family. As to quaternary structure, part of the 50S ribosomal subunit; part of the 5S rRNA subcomplex. Contacts the 5S rRNA and the P site tRNA. Forms a bridge to the 30S subunit in the 70S ribosome. Post-translationally, both N-terminus methionine truncation and retention have been observed for this protein. May be methylated twice, on undetermined residues.

Functionally, this is one of the proteins that bind and probably mediate the attachment of the 5S RNA into the large ribosomal subunit, where it forms part of the central protuberance. In the 70S ribosome it contacts protein S13 of the 30S subunit (bridge B1b), connecting the 2 subunits; this bridge is implicated in subunit movement. Contacts the P site tRNA; the 5S rRNA and some of its associated proteins might help stabilize positioning of ribosome-bound tRNAs. This is Large ribosomal subunit protein uL5 from Rhodopseudomonas palustris (strain ATCC BAA-98 / CGA009).